The sequence spans 369 residues: Nuclear pore complex-interacting protein family member A2 (369 aa).

The tract at residues 325–346 (KTPPECLLTPLPPSAPPSADDN) is disordered.

Belongs to the NPIP family.

The protein is Nuclear pore complex-interacting protein family member A2 (NPIPA2) of Homo sapiens (Human).